The following is a 599-amino-acid chain: ATP-binding cassette sub-family E member 1 (599 aa).

2 4Fe-4S ferredoxin-type domains span residues 7 to 37 and 46 to 75; these read RIAIVNHDKCKPKKCRQECKKSCPVVRMGKL and KIAWISETLCIGCGICIKKCPFGALSIVNL. Lys20 participates in a covalent cross-link: Glycyl lysine isopeptide (Lys-Gly) (interchain with G-Cter in ubiquitin). 2 ABC transporter domains span residues 79-315 and 342-562; these read LEKE…FLDG and VKKM…LSQL. Residues 110–117 and 379–386 each bind ATP; these read GTNGIGKS and GENGTGKT. Ser417 carries the post-translational modification Phosphoserine. Thr550 carries the phosphothreonine modification.

Belongs to the ABC transporter superfamily. ABCE family. (Microbial infection) Interacts with Chandipura virus matrix protein. In terms of assembly, interacts with PINK1. Interacts with CNOT4. Interacts with PELO. Probably heterodimerizes with RNASEL; this interaction inhibits RNASEL. As to quaternary structure, (Microbial infection) Interacts with HIV-1 proteins Vif and Gag. (Microbial infection) Interacts with HIV-2 protein Gag. In terms of processing, ubiquitinated by CNOT4. Ubiquitination mediates the recruitment of autophagy receptors to the mitochondrial outer membrane and initiates mitophagy.

It is found in the cytoplasm. The protein resides in the mitochondrion. The catalysed reaction is GTP + H2O = GDP + phosphate + H(+). The enzyme catalyses ATP + H2O = ADP + phosphate + H(+). It catalyses the reaction CTP + H2O = CDP + phosphate + H(+). It carries out the reaction UTP + H2O = UDP + phosphate + H(+). Functionally, nucleoside-triphosphatase (NTPase) involved in ribosome recycling by mediating ribosome disassembly. Able to hydrolyze ATP, GTP, UTP and CTP. Splits ribosomes into free 60S subunits and tRNA- and mRNA-bound 40S subunits. Acts either after canonical termination facilitated by release factors (ETF1/eRF1) or after recognition of stalled and vacant ribosomes by mRNA surveillance factors (PELO/Pelota). Involved in the No-Go Decay (NGD) pathway: recruited to stalled ribosomes by the Pelota-HBS1L complex, and drives the disassembly of stalled ribosomes, followed by degradation of damaged mRNAs as part of the NGD pathway. Also plays a role in quality control of translation of mitochondrial outer membrane-localized mRNA. As part of the PINK1-regulated signaling, ubiquitinated by CNOT4 upon mitochondria damage; this modification generates polyubiquitin signals that recruit autophagy receptors to the mitochondrial outer membrane and initiate mitophagy. RNASEL-specific protein inhibitor which antagonizes the binding of 2-5A (5'-phosphorylated 2',5'-linked oligoadenylates) to RNASEL. Negative regulator of the anti-viral effect of the interferon-regulated 2-5A/RNASEL pathway. Its function is as follows. (Microbial infection) May act as a chaperone for post-translational events during HIV-1 capsid assembly. (Microbial infection) Plays a role in the down-regulation of the 2-5A/RNASEL pathway during encephalomyocarditis virus (EMCV) and HIV-1 infections. The protein is ATP-binding cassette sub-family E member 1 (ABCE1) of Homo sapiens (Human).